The primary structure comprises 261 residues: Ribosomal RNA small subunit methyltransferase J (261 aa).

S-adenosyl-L-methionine is bound by residues 109-110 (RD), 125-126 (ER), and aspartate 179.

Belongs to the methyltransferase superfamily. RsmJ family.

The protein resides in the cytoplasm. It catalyses the reaction guanosine(1516) in 16S rRNA + S-adenosyl-L-methionine = N(2)-methylguanosine(1516) in 16S rRNA + S-adenosyl-L-homocysteine + H(+). In terms of biological role, specifically methylates the guanosine in position 1516 of 16S rRNA. This chain is Ribosomal RNA small subunit methyltransferase J, found in Pseudomonas aeruginosa (strain LESB58).